The sequence spans 90 residues: Cell division topological specificity factor (90 aa).

The protein belongs to the MinE family.

Prevents the cell division inhibition by proteins MinC and MinD at internal division sites while permitting inhibition at polar sites. This ensures cell division at the proper site by restricting the formation of a division septum at the midpoint of the long axis of the cell. This chain is Cell division topological specificity factor, found in Francisella tularensis subsp. tularensis (strain FSC 198).